Reading from the N-terminus, the 171-residue chain is ATP synthase subunit b (171 aa).

The chain crosses the membrane as a helical span at residues 2-22 (VLVKMALGFLILLSPLCAMEL).

This sequence belongs to the ATPase B chain family. In terms of assembly, F-type ATPases have 2 components, F(1) - the catalytic core - and F(0) - the membrane proton channel. F(1) has five subunits: alpha(3), beta(3), gamma(1), delta(1), epsilon(1). F(0) has three main subunits: a(1), b(2) and c(10-14). The alpha and beta chains form an alternating ring which encloses part of the gamma chain. F(1) is attached to F(0) by a central stalk formed by the gamma and epsilon chains, while a peripheral stalk is formed by the delta and b chains.

The protein localises to the cell inner membrane. Its function is as follows. F(1)F(0) ATP synthase produces ATP from ADP in the presence of a proton or sodium gradient. F-type ATPases consist of two structural domains, F(1) containing the extramembraneous catalytic core and F(0) containing the membrane proton channel, linked together by a central stalk and a peripheral stalk. During catalysis, ATP synthesis in the catalytic domain of F(1) is coupled via a rotary mechanism of the central stalk subunits to proton translocation. Component of the F(0) channel, it forms part of the peripheral stalk, linking F(1) to F(0). The polypeptide is ATP synthase subunit b (Helicobacter acinonychis (strain Sheeba)).